The primary structure comprises 109 residues: Phosphoribosyl-ATP pyrophosphatase (109 aa).

It belongs to the PRA-PH family.

The protein localises to the cytoplasm. The enzyme catalyses 1-(5-phospho-beta-D-ribosyl)-ATP + H2O = 1-(5-phospho-beta-D-ribosyl)-5'-AMP + diphosphate + H(+). The protein operates within amino-acid biosynthesis; L-histidine biosynthesis; L-histidine from 5-phospho-alpha-D-ribose 1-diphosphate: step 2/9. The sequence is that of Phosphoribosyl-ATP pyrophosphatase from Azorhizobium caulinodans (strain ATCC 43989 / DSM 5975 / JCM 20966 / LMG 6465 / NBRC 14845 / NCIMB 13405 / ORS 571).